The following is a 400-amino-acid chain: Homoserine O-acetyltransferase (400 aa).

In terms of domain architecture, AB hydrolase-1 spans 64-373 (NAILICHALT…TDRGHDAFLL (310 aa)). The active-site Nucleophile is the serine 169. Residue arginine 239 coordinates substrate. Active-site residues include aspartate 335 and histidine 368. Residue aspartate 369 coordinates substrate.

It belongs to the AB hydrolase superfamily. MetX family. As to quaternary structure, homodimer.

It is found in the cytoplasm. It catalyses the reaction L-homoserine + acetyl-CoA = O-acetyl-L-homoserine + CoA. The protein operates within amino-acid biosynthesis; L-methionine biosynthesis via de novo pathway; O-acetyl-L-homoserine from L-homoserine: step 1/1. Its function is as follows. Transfers an acetyl group from acetyl-CoA to L-homoserine, forming acetyl-L-homoserine. The sequence is that of Homoserine O-acetyltransferase from Bradyrhizobium diazoefficiens (strain JCM 10833 / BCRC 13528 / IAM 13628 / NBRC 14792 / USDA 110).